Here is a 137-residue protein sequence, read N- to C-terminus: Nucleoside diphosphate kinase (137 aa).

The ATP site is built by K9, F57, R85, T91, R102, and N112. The active-site Pros-phosphohistidine intermediate is the H115.

The protein belongs to the NDK family. In terms of assembly, homotetramer. Requires Mg(2+) as cofactor.

The protein resides in the cytoplasm. The catalysed reaction is a 2'-deoxyribonucleoside 5'-diphosphate + ATP = a 2'-deoxyribonucleoside 5'-triphosphate + ADP. It carries out the reaction a ribonucleoside 5'-diphosphate + ATP = a ribonucleoside 5'-triphosphate + ADP. Functionally, major role in the synthesis of nucleoside triphosphates other than ATP. The ATP gamma phosphate is transferred to the NDP beta phosphate via a ping-pong mechanism, using a phosphorylated active-site intermediate. This Campylobacter jejuni subsp. jejuni serotype O:23/36 (strain 81-176) protein is Nucleoside diphosphate kinase.